The chain runs to 283 residues: Arsenite methyltransferase (283 aa).

The protein belongs to the methyltransferase superfamily. Arsenite methyltransferase family.

It catalyses the reaction arsenic triglutathione + [thioredoxin]-dithiol + S-adenosyl-L-methionine + 2 H2O = methylarsonous acid + [thioredoxin]-disulfide + 3 glutathione + S-adenosyl-L-homocysteine + H(+). It carries out the reaction arsenic triglutathione + 2 [thioredoxin]-dithiol + 2 S-adenosyl-L-methionine + H2O = dimethylarsinous acid + 2 [thioredoxin]-disulfide + 3 glutathione + 2 S-adenosyl-L-homocysteine + 2 H(+). The catalysed reaction is arsenic triglutathione + 3 [thioredoxin]-dithiol + 3 S-adenosyl-L-methionine = trimethylarsine + 3 [thioredoxin]-disulfide + 3 glutathione + 3 S-adenosyl-L-homocysteine + 3 H(+). Functionally, catalyzes the transfer of a methyl group from AdoMet to arsenite, producing methylated arsenicals. Involved in the conversion of As(III) to a number of di- and trimethylated species, with trimethylarsine as the end product. Reduces the arsenic toxicity in the cell and may contribute to the global arsenic cycling. This Rhodopseudomonas palustris (strain ATCC BAA-98 / CGA009) protein is Arsenite methyltransferase.